We begin with the raw amino-acid sequence, 859 residues long: Bifunctional uridylyltransferase/uridylyl-removing enzyme (859 aa).

The tract at residues 1-325 is uridylyltransferase; sequence MSAHAAPSPE…PATSGITRVL (325 aa). The interval 326-682 is uridylyl-removing; the sequence is SHDRFVEKQG…ARPSPIGDAL (357 aa). The HD domain maps to 444–566; sequence VDQHILMVLR…VGNERYLTAL (123 aa). 2 ACT domains span residues 683–762 and 791–859; these read QVLV…PEPS and ILSV…AIAV.

Belongs to the GlnD family. Mg(2+) is required as a cofactor.

It catalyses the reaction [protein-PII]-L-tyrosine + UTP = [protein-PII]-uridylyl-L-tyrosine + diphosphate. The enzyme catalyses [protein-PII]-uridylyl-L-tyrosine + H2O = [protein-PII]-L-tyrosine + UMP + H(+). With respect to regulation, uridylyltransferase (UTase) activity is inhibited by glutamine, while glutamine activates uridylyl-removing (UR) activity. Its function is as follows. Modifies, by uridylylation and deuridylylation, the PII regulatory proteins (GlnB and homologs), in response to the nitrogen status of the cell that GlnD senses through the glutamine level. Under low glutamine levels, catalyzes the conversion of the PII proteins and UTP to PII-UMP and PPi, while under higher glutamine levels, GlnD hydrolyzes PII-UMP to PII and UMP (deuridylylation). Thus, controls uridylylation state and activity of the PII proteins, and plays an important role in the regulation of nitrogen fixation and metabolism. The protein is Bifunctional uridylyltransferase/uridylyl-removing enzyme of Burkholderia vietnamiensis (strain G4 / LMG 22486) (Burkholderia cepacia (strain R1808)).